Reading from the N-terminus, the 109-residue chain is Large ribosomal subunit protein uL22 (109 aa).

This sequence belongs to the universal ribosomal protein uL22 family. In terms of assembly, part of the 50S ribosomal subunit.

In terms of biological role, this protein binds specifically to 23S rRNA; its binding is stimulated by other ribosomal proteins, e.g. L4, L17, and L20. It is important during the early stages of 50S assembly. It makes multiple contacts with different domains of the 23S rRNA in the assembled 50S subunit and ribosome. Functionally, the globular domain of the protein is located near the polypeptide exit tunnel on the outside of the subunit, while an extended beta-hairpin is found that lines the wall of the exit tunnel in the center of the 70S ribosome. This Psychrobacter sp. (strain PRwf-1) protein is Large ribosomal subunit protein uL22.